The following is a 216-amino-acid chain: Pyrophosphatase PpaX (216 aa).

D9 serves as the catalytic Nucleophile.

Belongs to the HAD-like hydrolase superfamily. PpaX family. Mg(2+) serves as cofactor.

It catalyses the reaction diphosphate + H2O = 2 phosphate + H(+). Functionally, hydrolyzes pyrophosphate formed during P-Ser-HPr dephosphorylation by HPrK/P. Might play a role in controlling the intracellular pyrophosphate pool. The sequence is that of Pyrophosphatase PpaX from Bacillus cereus (strain G9842).